The chain runs to 1350 residues: uncharacterized protein (1350 aa).

Disordered stretches follow at residues serine 348–serine 371 and serine 923–glycine 944. A compositionally biased stretch (basic and acidic residues) spans serine 923–alanine 932.

This is an uncharacterized protein from Ictalurid herpesvirus 1 (strain Auburn) (IcHV-1).